The primary structure comprises 152 residues: Ribosomal RNA large subunit methyltransferase H (152 aa).

Residues leucine 68, glycine 100, and 119–124 each bind S-adenosyl-L-methionine; that span reads LGVMTW.

Belongs to the RNA methyltransferase RlmH family. In terms of assembly, homodimer.

It localises to the cytoplasm. It catalyses the reaction pseudouridine(1915) in 23S rRNA + S-adenosyl-L-methionine = N(3)-methylpseudouridine(1915) in 23S rRNA + S-adenosyl-L-homocysteine + H(+). Functionally, specifically methylates the pseudouridine at position 1915 (m3Psi1915) in 23S rRNA. This chain is Ribosomal RNA large subunit methyltransferase H, found in Rhodospirillum rubrum (strain ATCC 11170 / ATH 1.1.1 / DSM 467 / LMG 4362 / NCIMB 8255 / S1).